A 162-amino-acid chain; its full sequence is Dihydrofolate reductase type 3 (162 aa).

The region spanning leucine 2–arginine 160 is the DHFR domain.

It belongs to the dihydrofolate reductase family. In terms of assembly, monomer.

The catalysed reaction is (6S)-5,6,7,8-tetrahydrofolate + NADP(+) = 7,8-dihydrofolate + NADPH + H(+). The protein operates within cofactor biosynthesis; tetrahydrofolate biosynthesis; 5,6,7,8-tetrahydrofolate from 7,8-dihydrofolate: step 1/1. Functionally, key enzyme in folate metabolism. Catalyzes an essential reaction for de novo glycine and purine synthesis, and for DNA precursor synthesis. The chain is Dihydrofolate reductase type 3 (dhfrIII) from Salmonella typhimurium.